A 362-amino-acid polypeptide reads, in one-letter code: [LysW]-lysine hydrolase (362 aa).

His-69 is a Zn(2+) binding site. The active site involves Asp-71. A Zn(2+)-binding site is contributed by Asp-94. The active-site Proton acceptor is Glu-127. Glu-128, Glu-151, and His-334 together coordinate Zn(2+).

Belongs to the peptidase M20A family. LysK subfamily. Zn(2+) serves as cofactor. Requires Co(2+) as cofactor.

It localises to the cytoplasm. It catalyses the reaction [amino-group carrier protein]-C-terminal-gamma-(L-lysyl)-L-glutamate + H2O = [amino-group carrier protein]-C-terminal-L-glutamate + L-lysine. It functions in the pathway amino-acid biosynthesis; L-lysine biosynthesis via AAA pathway; L-lysine from L-alpha-aminoadipate (Thermus route): step 5/5. Functionally, catalyzes the release of L-lysine from [LysW]-gamma-L-lysine. The protein is [LysW]-lysine hydrolase of Deinococcus radiodurans (strain ATCC 13939 / DSM 20539 / JCM 16871 / CCUG 27074 / LMG 4051 / NBRC 15346 / NCIMB 9279 / VKM B-1422 / R1).